The following is a 266-amino-acid chain: Zinc transporter ZupT (266 aa).

A run of 8 helical transmembrane segments spans residues 8–28 (LLLT…ALVV), 35–55 (FLTL…FVEL), 70–90 (QAAA…IWAI), 123–143 (GLFT…AVFF), 152–172 (GIVI…AIAV), 185–205 (FTYS…GFAI), 209–229 (WLSP…MVYI), and 246–266 (LAIS…LLLA). Positions 134 and 137 each coordinate Fe(2+). 2 residues coordinate Zn(2+): Glu137 and His162. Fe(2+) is bound by residues Asn163, Glu166, and Glu195. Glu166 serves as a coordination point for Zn(2+).

The protein belongs to the ZIP transporter (TC 2.A.5) family. ZupT subfamily.

It localises to the cell membrane. The catalysed reaction is Zn(2+)(in) = Zn(2+)(out). In terms of biological role, mediates zinc uptake. May also transport other divalent cations. The sequence is that of Zinc transporter ZupT from Chlorobium phaeovibrioides (strain DSM 265 / 1930) (Prosthecochloris vibrioformis (strain DSM 265)).